The following is a 178-amino-acid chain: Probetacellulin (178 aa).

The first 31 residues, 1-31 (MARAAPGSGASPLPLLPALALGLVILHCVVA), serve as a signal peptide directing secretion. Over 32 to 118 (DGNSTRSPED…LFYLRGDRGQ (87 aa)) the chain is Extracellular. N-linked (GlcNAc...) asparagine glycosylation is present at asparagine 34. The EGF-like domain occupies 65 to 105 (HFSRCPKQYKHYCIKGRCRFVVAEQTPSCVCDEGYAGARCE). 3 disulfides stabilise this stretch: cysteine 69–cysteine 82, cysteine 77–cysteine 93, and cysteine 95–cysteine 104. A propeptide spans 112-178 (LRGDRGQILV…NDDIQETSIA (67 aa)) (removed in mature form). Residues 119–139 (ILVICLIAVMVIFIILVVSIC) form a helical membrane-spanning segment. Over 140–178 (TCCHPLRKRRKRRKKEEEMETLGKDITPINDDIQETSIA) the chain is Cytoplasmic.

As to quaternary structure, monomer. Interacts with EGFR and ERBB4. As to expression, expressed in a wide range of tissues, including the mammary gland.

Its subcellular location is the secreted. The protein localises to the extracellular space. It localises to the cell membrane. In terms of biological role, growth factor that binds to EGFR, ERBB4 and other EGF receptor family members. Potent mitogen for retinal pigment epithelial cells and vascular smooth muscle cells. This is Probetacellulin (BTC) from Bos taurus (Bovine).